We begin with the raw amino-acid sequence, 360 residues long: Photosystem II protein D1 (360 aa).

3 helical membrane passes run 29–46 (YIGW…TATS), 118–133 (HFLL…EWEL), and 142–156 (WIFV…AASA). His-118 contacts chlorophyll a. Tyr-126 lines the pheophytin a pocket. [CaMn4O5] cluster-binding residues include Asp-170 and Glu-189. Residues 197–218 (FHMAGVAGVFGGSLFSAMHGSL) traverse the membrane as a helical segment. Position 198 (His-198) interacts with chlorophyll a. A quinone contacts are provided by residues His-215 and 264–265 (SF). Fe cation is bound at residue His-215. Fe cation is bound at residue His-272. The chain crosses the membrane as a helical span at residues 274–288 (FLAAWPVVGIWLTAL). Residues His-332, Glu-333, Asp-342, and Ala-344 each contribute to the [CaMn4O5] cluster site. Residues 345–360 (SNEVLPVAVNAPAVNG) constitute a propeptide that is removed on maturation.

This sequence belongs to the reaction center PufL/M/PsbA/D family. In terms of assembly, PSII is composed of 1 copy each of membrane proteins PsbA, PsbB, PsbC, PsbD, PsbE, PsbF, PsbH, PsbI, PsbJ, PsbK, PsbL, PsbM, PsbT, PsbX, PsbY, PsbZ, Psb30/Ycf12, at least 3 peripheral proteins of the oxygen-evolving complex and a large number of cofactors. It forms dimeric complexes. The cofactor is The D1/D2 heterodimer binds P680, chlorophylls that are the primary electron donor of PSII, and subsequent electron acceptors. It shares a non-heme iron and each subunit binds pheophytin, quinone, additional chlorophylls, carotenoids and lipids. D1 provides most of the ligands for the Mn4-Ca-O5 cluster of the oxygen-evolving complex (OEC). There is also a Cl(-1) ion associated with D1 and D2, which is required for oxygen evolution. The PSII complex binds additional chlorophylls, carotenoids and specific lipids.. Post-translationally, tyr-161 forms a radical intermediate that is referred to as redox-active TyrZ, YZ or Y-Z. In terms of processing, C-terminally processed by CTPA; processing is essential to allow assembly of the oxygen-evolving complex and thus photosynthetic growth.

It localises to the plastid. It is found in the chloroplast thylakoid membrane. The enzyme catalyses 2 a plastoquinone + 4 hnu + 2 H2O = 2 a plastoquinol + O2. Functionally, photosystem II (PSII) is a light-driven water:plastoquinone oxidoreductase that uses light energy to abstract electrons from H(2)O, generating O(2) and a proton gradient subsequently used for ATP formation. It consists of a core antenna complex that captures photons, and an electron transfer chain that converts photonic excitation into a charge separation. The D1/D2 (PsbA/PsbD) reaction center heterodimer binds P680, the primary electron donor of PSII as well as several subsequent electron acceptors. This Heterosigma akashiwo (Chromophytic alga) protein is Photosystem II protein D1.